The following is a 155-amino-acid chain: Endoribonuclease YbeY (155 aa).

The tract at residues serine 64–leucine 84 is disordered. The Zn(2+) site is built by histidine 115, histidine 119, and histidine 125.

Belongs to the endoribonuclease YbeY family. It depends on Zn(2+) as a cofactor.

The protein localises to the cytoplasm. Single strand-specific metallo-endoribonuclease involved in late-stage 70S ribosome quality control and in maturation of the 3' terminus of the 16S rRNA. This Cutibacterium acnes (strain DSM 16379 / KPA171202) (Propionibacterium acnes) protein is Endoribonuclease YbeY.